Reading from the N-terminus, the 345-residue chain is Phosphoribosylformylglycinamidine cyclo-ligase (345 aa).

Belongs to the AIR synthase family.

Its subcellular location is the cytoplasm. The catalysed reaction is 2-formamido-N(1)-(5-O-phospho-beta-D-ribosyl)acetamidine + ATP = 5-amino-1-(5-phospho-beta-D-ribosyl)imidazole + ADP + phosphate + H(+). It participates in purine metabolism; IMP biosynthesis via de novo pathway; 5-amino-1-(5-phospho-D-ribosyl)imidazole from N(2)-formyl-N(1)-(5-phospho-D-ribosyl)glycinamide: step 2/2. This Shewanella sediminis (strain HAW-EB3) protein is Phosphoribosylformylglycinamidine cyclo-ligase.